Reading from the N-terminus, the 250-residue chain is Recombination protein RecR (250 aa).

A C4-type zinc finger spans residues Cys-56–Cys-71. Positions Ser-79–Pro-227 constitute a Toprim domain. Residues Leu-148 to Thr-172 are disordered.

This sequence belongs to the RecR family.

Its function is as follows. May play a role in DNA repair. It seems to be involved in an RecBC-independent recombinational process of DNA repair. It may act with RecF and RecO. This Corynebacterium jeikeium (strain K411) protein is Recombination protein RecR.